The chain runs to 80 residues: Defensin-like protein 2 (80 aa).

The first 29 residues, 1 to 29, serve as a signal peptide directing secretion; that stretch reads MAKFASIIVLLFVALVVFAAFEEPTMVEA. The residue at position 30 (Gln30) is a Pyrrolidone carboxylic acid. 4 disulfide bridges follow: Cys33/Cys80, Cys44/Cys65, Cys50/Cys74, and Cys54/Cys76.

This sequence belongs to the DEFL family.

Its subcellular location is the secreted. Its function is as follows. Possesses antifungal activity sensitive to inorganic cations. Induces potential changes in fungal membranes and increased K(+) efflux and Ca(2+) uptake. The chain is Defensin-like protein 2 (AFP2) from Raphanus sativus (Radish).